Reading from the N-terminus, the 94-residue chain is DNA-directed RNA polymerase subunit Rpo11 (94 aa).

The protein belongs to the archaeal Rpo11/eukaryotic RPB11/RPC19 RNA polymerase subunit family. Part of the RNA polymerase complex.

Its subcellular location is the cytoplasm. The enzyme catalyses RNA(n) + a ribonucleoside 5'-triphosphate = RNA(n+1) + diphosphate. Functionally, DNA-dependent RNA polymerase (RNAP) catalyzes the transcription of DNA into RNA using the four ribonucleoside triphosphates as substrates. The sequence is that of DNA-directed RNA polymerase subunit Rpo11 from Thermococcus kodakarensis (strain ATCC BAA-918 / JCM 12380 / KOD1) (Pyrococcus kodakaraensis (strain KOD1)).